The following is a 506-amino-acid chain: Maturase K (506 aa).

It belongs to the intron maturase 2 family. MatK subfamily.

It is found in the plastid. The protein localises to the chloroplast. Functionally, usually encoded in the trnK tRNA gene intron. Probably assists in splicing its own and other chloroplast group II introns. This is Maturase K from Medicago truncatula (Barrel medic).